A 351-amino-acid chain; its full sequence is Protein RecA (351 aa).

73-80 (GPESSGKT) contacts ATP.

This sequence belongs to the RecA family.

It localises to the cytoplasm. Its function is as follows. Can catalyze the hydrolysis of ATP in the presence of single-stranded DNA, the ATP-dependent uptake of single-stranded DNA by duplex DNA, and the ATP-dependent hybridization of homologous single-stranded DNAs. It interacts with LexA causing its activation and leading to its autocatalytic cleavage. The chain is Protein RecA from Oleidesulfovibrio alaskensis (strain ATCC BAA-1058 / DSM 17464 / G20) (Desulfovibrio alaskensis).